Here is a 70-residue protein sequence, read N- to C-terminus: MPNIRVKENEPFEVAIRRFKRTVEKTGLLTELRAREFYEKPTTERKRKAAAAVKRQHKRLRSLTLPPKLY.

Residues 43–70 (TERKRKAAAAVKRQHKRLRSLTLPPKLY) are disordered. Residues 45 to 61 (RKRKAAAAVKRQHKRLR) are compositionally biased toward basic residues.

The protein belongs to the bacterial ribosomal protein bS21 family.

The protein is Small ribosomal subunit protein bS21 of Dechloromonas aromatica (strain RCB).